Consider the following 597-residue polypeptide: Proteasome-associated ATPase (597 aa).

Basic and acidic residues predominate over residues 1–12 (MQHDRPGSRPEE). The segment at 1–22 (MQHDRPGSRPEEGGEQQIGGDA) is disordered. Residues 21–97 (DAELNSQIRL…REEVDRLAQP (77 aa)) adopt a coiled-coil conformation. 284 to 289 (GCGKTL) is a binding site for ATP. Residues 596 to 597 (YL) form a docks into pockets in the proteasome alpha-ring region.

This sequence belongs to the AAA ATPase family. Homohexamer. Assembles into a hexameric ring structure that caps the 20S proteasome core. Strongly interacts with the prokaryotic ubiquitin-like protein Pup through a hydrophobic interface; the interacting region of ARC lies in its N-terminal coiled-coil domain. There is one Pup binding site per ARC hexamer ring. Upon ATP-binding, the C-terminus of ARC interacts with the alpha-rings of the proteasome core, possibly by binding to the intersubunit pockets.

It participates in protein degradation; proteasomal Pup-dependent pathway. Its function is as follows. ATPase which is responsible for recognizing, binding, unfolding and translocation of pupylated proteins into the bacterial 20S proteasome core particle. May be essential for opening the gate of the 20S proteasome via an interaction with its C-terminus, thereby allowing substrate entry and access to the site of proteolysis. Thus, the C-termini of the proteasomal ATPase may function like a 'key in a lock' to induce gate opening and therefore regulate proteolysis. This chain is Proteasome-associated ATPase, found in Saccharopolyspora erythraea (strain ATCC 11635 / DSM 40517 / JCM 4748 / NBRC 13426 / NCIMB 8594 / NRRL 2338).